A 327-amino-acid chain; its full sequence is Methionyl-tRNA formyltransferase (327 aa).

121–124 (SLLP) serves as a coordination point for (6S)-5,6,7,8-tetrahydrofolate.

It belongs to the Fmt family.

It carries out the reaction L-methionyl-tRNA(fMet) + (6R)-10-formyltetrahydrofolate = N-formyl-L-methionyl-tRNA(fMet) + (6S)-5,6,7,8-tetrahydrofolate + H(+). Attaches a formyl group to the free amino group of methionyl-tRNA(fMet). The formyl group appears to play a dual role in the initiator identity of N-formylmethionyl-tRNA by promoting its recognition by IF2 and preventing the misappropriation of this tRNA by the elongation apparatus. This chain is Methionyl-tRNA formyltransferase, found in Burkholderia pseudomallei (strain 668).